We begin with the raw amino-acid sequence, 227 residues long: LysM and putative peptidoglycan-binding domain-containing protein 1 (227 aa).

Over residues methionine 1–glycine 11 the composition is skewed to pro residues. The disordered stretch occupies residues methionine 1–arginine 20. Phosphoserine occurs at positions 23 and 33. The LysM domain maps to leucine 40–isoleucine 84. The disordered stretch occupies residues asparagine 95–histidine 150. The segment covering aspartate 98 to glutamate 107 has biased composition (acidic residues). Serine 99 carries the post-translational modification Phosphoserine. The segment covering glutamate 108–glutamate 127 has biased composition (basic and acidic residues). Phosphoserine occurs at positions 166, 181, 194, and 212. Residues alanine 172–arginine 196 are disordered.

The protein is LysM and putative peptidoglycan-binding domain-containing protein 1 (LYSMD1) of Macaca fascicularis (Crab-eating macaque).